The following is a 166-amino-acid chain: Bacterial non-heme ferritin (166 aa).

Residues 2–145 enclose the Ferritin-like diiron domain; that stretch reads LSKDLLEALN…THIDYLNRIG (144 aa). E17, E50, H53, E94, and Q127 together coordinate Fe cation.

It belongs to the ferritin family. Prokaryotic subfamily.

The protein resides in the cytoplasm. The catalysed reaction is 4 Fe(2+) + O2 + 6 H2O = 4 iron(III) oxide-hydroxide + 12 H(+). Functionally, iron-storage protein. The chain is Bacterial non-heme ferritin (ftnA) from Staphylococcus haemolyticus (strain JCSC1435).